The chain runs to 325 residues: Germination protease (325 aa).

The propeptide occupies 1–7; the sequence is MYNVRTD.

It belongs to the peptidase A25 family. Homotetramer. In terms of processing, autoproteolytically processed. The inactive tetrameric zymogen termed p46 autoprocesses to a smaller form termed p41, which is active only during spore germination.

It catalyses the reaction Endopeptidase action with P4 Glu or Asp, P1 preferably Glu &gt; Asp, P1' hydrophobic and P2' Ala.. In terms of biological role, initiates the rapid degradation of small, acid-soluble proteins during spore germination. The chain is Germination protease from Clostridium perfringens (strain 13 / Type A).